The following is a 259-amino-acid chain: Submandibular glandular kallikrein-9 (259 aa).

The signal sequence occupies residues 1-18 (MWFLILFLALSLGQIDAA). Positions 19–24 (PPGQSR) are cleaved as a propeptide — activation peptide. Residues 25–256 (VVGGYNCETN…FTSWIKKVMK (232 aa)) form the Peptidase S1 domain. Disulfide bonds link C31–C171, C48–C64, C150–C217, C182–C196, and C207–C232. H63 serves as the catalytic Charge relay system. The N-linked (GlcNAc...) asparagine glycan is linked to N106. Residue D118 is the Charge relay system of the active site. The active-site Charge relay system is S211.

It belongs to the peptidase S1 family. Kallikrein subfamily. As to quaternary structure, heterodimer of a light chain and heavy chain linked by a disulfide bond.

The enzyme catalyses Preferential cleavage of Arg-|-Xaa bonds in small molecule substrates. Highly selective action to release kallidin (lysyl-bradykinin) from kininogen involves hydrolysis of Met-|-Xaa or Leu-|-Xaa.. Functionally, glandular kallikreins cleave Met-Lys and Arg-Ser bonds in kininogen to release Lys-bradykinin. This enzyme has a vasoconstrictor activity. KLK-9 has both a chymotrypsin-like and a trypsin-like properties. The protein is Submandibular glandular kallikrein-9 (Klk9) of Rattus norvegicus (Rat).